A 169-amino-acid chain; its full sequence is Probable prefoldin subunit 3 (169 aa).

Belongs to the prefoldin subunit alpha family. As to quaternary structure, heterohexamer of two PFD-alpha type and four PFD-beta type subunits.

In terms of biological role, binds specifically to cytosolic chaperonin (c-CPN) and transfers target proteins to it. Binds to nascent polypeptide chain and promotes folding in an environment in which there are many competing pathways for nonnative proteins. This is Probable prefoldin subunit 3 from Schizosaccharomyces pombe (strain 972 / ATCC 24843) (Fission yeast).